A 509-amino-acid polypeptide reads, in one-letter code: ATP synthase subunit alpha (509 aa).

169–176 contributes to the ATP binding site; sequence GDRQTGKT.

Belongs to the ATPase alpha/beta chains family. As to quaternary structure, F-type ATPases have 2 components, CF(1) - the catalytic core - and CF(0) - the membrane proton channel. CF(1) has five subunits: alpha(3), beta(3), gamma(1), delta(1), epsilon(1). CF(0) has three main subunits: a(1), b(2) and c(9-12). The alpha and beta chains form an alternating ring which encloses part of the gamma chain. CF(1) is attached to CF(0) by a central stalk formed by the gamma and epsilon chains, while a peripheral stalk is formed by the delta and b chains.

The protein localises to the cell inner membrane. The enzyme catalyses ATP + H2O + 4 H(+)(in) = ADP + phosphate + 5 H(+)(out). Its function is as follows. Produces ATP from ADP in the presence of a proton gradient across the membrane. The alpha chain is a regulatory subunit. The polypeptide is ATP synthase subunit alpha (Brucella melitensis biotype 1 (strain ATCC 23456 / CCUG 17765 / NCTC 10094 / 16M)).